The sequence spans 243 residues: Transcription factor TFIIS homolog (243 aa).

The region spanning 77 to 201 is the TFIIS central domain; it reads MRDIIQMMFF…SQQKVAEKTS (125 aa). A TFIIS-type zinc finger spans residues 202 to 242; sequence QLYKCPNCKQRMCTYREVQTRALDEPSTIFCTCKKCGHEFI. The Zn(2+) site is built by Cys-206, Cys-209, Cys-234, and Cys-237.

It belongs to the TFS-II family.

Putative initiation factor. Necessary for efficient transcription elongation past template-encoded arresting sites. The sequence is that of Transcription factor TFIIS homolog from Ornithodoros (relapsing fever ticks).